The sequence spans 552 residues: Urocanate hydratase (552 aa).

NAD(+)-binding positions include 48–49 (GG), Q126, 172–174 (GMG), D192, 238–239 (NA), 259–263 (QTSAH), 268–269 (YL), and Y317. C405 is a catalytic residue. G487 provides a ligand contact to NAD(+).

The protein belongs to the urocanase family. The cofactor is NAD(+).

The protein resides in the cytoplasm. It carries out the reaction 4-imidazolone-5-propanoate = trans-urocanate + H2O. It functions in the pathway amino-acid degradation; L-histidine degradation into L-glutamate; N-formimidoyl-L-glutamate from L-histidine: step 2/3. In terms of biological role, catalyzes the conversion of urocanate to 4-imidazolone-5-propionate. This is Urocanate hydratase from Streptomyces griseus subsp. griseus (strain JCM 4626 / CBS 651.72 / NBRC 13350 / KCC S-0626 / ISP 5235).